The chain runs to 852 residues: Leucine--tRNA ligase (852 aa).

Residues 51-61 carry the 'HIGH' region motif; it reads PYPSGDLHMGH. A 'KMSKS' region motif is present at residues 615 to 619; sequence KMSKS. Residue Lys-618 participates in ATP binding.

Belongs to the class-I aminoacyl-tRNA synthetase family.

Its subcellular location is the cytoplasm. It catalyses the reaction tRNA(Leu) + L-leucine + ATP = L-leucyl-tRNA(Leu) + AMP + diphosphate. This is Leucine--tRNA ligase from Clavibacter sepedonicus (Clavibacter michiganensis subsp. sepedonicus).